A 586-amino-acid chain; its full sequence is 2-succinyl-5-enolpyruvyl-6-hydroxy-3-cyclohexene-1-carboxylate synthase (586 aa).

The protein belongs to the TPP enzyme family. MenD subfamily. As to quaternary structure, homodimer. Mg(2+) serves as cofactor. Mn(2+) is required as a cofactor. It depends on thiamine diphosphate as a cofactor.

The enzyme catalyses isochorismate + 2-oxoglutarate + H(+) = 5-enolpyruvoyl-6-hydroxy-2-succinyl-cyclohex-3-ene-1-carboxylate + CO2. Its pathway is quinol/quinone metabolism; 1,4-dihydroxy-2-naphthoate biosynthesis; 1,4-dihydroxy-2-naphthoate from chorismate: step 2/7. It functions in the pathway cofactor biosynthesis; phylloquinone biosynthesis. Its function is as follows. Catalyzes the thiamine diphosphate-dependent decarboxylation of 2-oxoglutarate and the subsequent addition of the resulting succinic semialdehyde-thiamine pyrophosphate anion to isochorismate to yield 2-succinyl-5-enolpyruvyl-6-hydroxy-3-cyclohexene-1-carboxylate (SEPHCHC). The polypeptide is 2-succinyl-5-enolpyruvyl-6-hydroxy-3-cyclohexene-1-carboxylate synthase (Acaryochloris marina (strain MBIC 11017)).